The sequence spans 57 residues: Large ribosomal subunit protein uL30 (57 aa).

Belongs to the universal ribosomal protein uL30 family. As to quaternary structure, part of the 50S ribosomal subunit.

The chain is Large ribosomal subunit protein uL30 from Acholeplasma laidlawii (strain PG-8A).